Consider the following 123-residue polypeptide: Putative trans-acting factor (123 aa).

Disordered regions lie at residues 1–38 and 100–123; these read MEAVIREGGSLPQVRSASRNQQRSGESTKGRKWEKQLR and VTHLGGRNSQGRSQGTRVWPLGRP. Polar residues predominate over residues 13–25; that stretch reads QVRSASRNQQRSG. The segment covering 26-38 has biased composition (basic and acidic residues); that stretch reads ESTKGRKWEKQLR. Positions 106–115 are enriched in polar residues; that stretch reads RNSQGRSQGT.

This Avian leukosis virus subgroup A (isolate RSA) (ALV-A RSA) protein is Putative trans-acting factor (trans-acting factor).